A 490-amino-acid chain; its full sequence is ATP synthase subunit alpha 1 (490 aa).

This sequence belongs to the ATPase alpha/beta chains family. F-type ATPases have 2 components, CF(1) - the catalytic core - and CF(0) - the membrane proton channel. CF(1) has five subunits: alpha(3), beta(3), gamma(1), delta(1), epsilon(1). CF(0) has three main subunits: a(1), b(2) and c(9-12). The alpha and beta chains form an alternating ring which encloses part of the gamma chain. CF(1) is attached to CF(0) by a central stalk formed by the gamma and epsilon chains, while a peripheral stalk is formed by the delta and b chains.

The protein resides in the cell inner membrane. The catalysed reaction is ATP + H2O + 4 H(+)(in) = ADP + phosphate + 5 H(+)(out). Its function is as follows. Produces ATP from ADP in the presence of a proton gradient across the membrane. The alpha chain is a regulatory subunit. The sequence is that of ATP synthase subunit alpha 1 from Legionella pneumophila (strain Paris).